The primary structure comprises 241 residues: uncharacterized protein (241 aa).

The protein belongs to the AB hydrolase superfamily. AB hydrolase 2 family.

This is an uncharacterized protein from Schizosaccharomyces pombe (strain 972 / ATCC 24843) (Fission yeast).